The sequence spans 307 residues: Aspartate carbamoyltransferase catalytic subunit (307 aa).

2 residues coordinate carbamoyl phosphate: arginine 54 and threonine 55. Lysine 83 lines the L-aspartate pocket. 3 residues coordinate carbamoyl phosphate: arginine 104, histidine 132, and glutamine 135. 2 residues coordinate L-aspartate: arginine 165 and arginine 228. Carbamoyl phosphate is bound by residues leucine 267 and proline 268.

The protein belongs to the aspartate/ornithine carbamoyltransferase superfamily. ATCase family. In terms of assembly, heterododecamer (2C3:3R2) of six catalytic PyrB chains organized as two trimers (C3), and six regulatory PyrI chains organized as three dimers (R2).

It catalyses the reaction carbamoyl phosphate + L-aspartate = N-carbamoyl-L-aspartate + phosphate + H(+). It participates in pyrimidine metabolism; UMP biosynthesis via de novo pathway; (S)-dihydroorotate from bicarbonate: step 2/3. Functionally, catalyzes the condensation of carbamoyl phosphate and aspartate to form carbamoyl aspartate and inorganic phosphate, the committed step in the de novo pyrimidine nucleotide biosynthesis pathway. The protein is Aspartate carbamoyltransferase catalytic subunit of Clostridium perfringens (strain 13 / Type A).